We begin with the raw amino-acid sequence, 429 residues long: MKVLVIGNGGREHALAWKAAQSPLVETVFVAPGNAGTALEPALQNVAIGVTDIPALLDFAQNEKVDLTIVGPEAPLVKGVVDTFRAAGLKIFGPTAGAAQLEGSKAFTKDFLARHNIPTAEYQNFTEVEPALAYLREKGAPIVIKADGLAAGKGVIVAMTLEEAEAAVRDMLAGNAFGDAGHRIVIEEFLDGEEASFIVMVDGEHVLPMATSQDHKRVGDKDTGPNTGGMGAYSPAPVVTDEVHQRTMERIIWPTVKGMAAEGNTYTGFLYAGLMIDKQGNPKVIEFNCRFGDPETQPIMLRMKSDLVELCLAACEGKLDEKTSEWDERASLGVVMAAGGYPGDYRTGDVIHGLPLEEVADGKVFHAGTKLADDEQVVTSGGRVLCVTALGHTVAEAQKRAYALMTDIHWDDCFCRKDIGWRAIEREQN.

Residues 109–316 (KDFLARHNIP…LVELCLAACE (208 aa)) form the ATP-grasp domain. Residue 135 to 196 (LREKGAPIVI…EEFLDGEEAS (62 aa)) participates in ATP binding. Residues 212–236 (SQDHKRVGDKDTGPNTGGMGAYSPA) are disordered. The segment covering 213-223 (QDHKRVGDKDT) has biased composition (basic and acidic residues). Residues Glu286 and Asn288 each contribute to the Mg(2+) site.

The protein belongs to the GARS family. As to quaternary structure, monomer. It depends on Mg(2+) as a cofactor. Requires Mn(2+) as cofactor.

It catalyses the reaction 5-phospho-beta-D-ribosylamine + glycine + ATP = N(1)-(5-phospho-beta-D-ribosyl)glycinamide + ADP + phosphate + H(+). It functions in the pathway purine metabolism; IMP biosynthesis via de novo pathway; N(1)-(5-phospho-D-ribosyl)glycinamide from 5-phospho-alpha-D-ribose 1-diphosphate: step 2/2. The sequence is that of Phosphoribosylamine--glycine ligase from Escherichia coli O6:H1 (strain CFT073 / ATCC 700928 / UPEC).